We begin with the raw amino-acid sequence, 297 residues long: 5'-3' exonuclease (297 aa).

The 5'-3' exonuclease domain maps to Glu-171–Ile-262.

Its function is as follows. 5'-3' exonuclease acting preferentially on double-stranded DNA. This Mycoplasmopsis pulmonis (strain UAB CTIP) (Mycoplasma pulmonis) protein is 5'-3' exonuclease (polA).